We begin with the raw amino-acid sequence, 196 residues long: Cell division protein SepF (196 aa).

Residues Val-15–Lys-80 are disordered. Positions Arg-56 to Ser-79 are enriched in polar residues.

This sequence belongs to the SepF family. Homodimer. Interacts with FtsZ.

It localises to the cytoplasm. In terms of biological role, cell division protein that is part of the divisome complex and is recruited early to the Z-ring. Probably stimulates Z-ring formation, perhaps through the cross-linking of FtsZ protofilaments. Its function overlaps with FtsA. In Lactococcus lactis subsp. cremoris (strain SK11), this protein is Cell division protein SepF.